Reading from the N-terminus, the 1377-residue chain is DNA-directed RNA polymerase subunit beta' (1377 aa).

4 residues coordinate Zn(2+): Cys60, Cys62, Cys75, and Cys78. Residues Asp449, Asp451, and Asp453 each contribute to the Mg(2+) site. Zn(2+) is bound by residues Cys777, Cys851, Cys858, and Cys861.

Belongs to the RNA polymerase beta' chain family. In terms of assembly, the RNAP catalytic core consists of 2 alpha, 1 beta, 1 beta' and 1 omega subunit. When a sigma factor is associated with the core the holoenzyme is formed, which can initiate transcription. The cofactor is Mg(2+). Zn(2+) serves as cofactor.

The catalysed reaction is RNA(n) + a ribonucleoside 5'-triphosphate = RNA(n+1) + diphosphate. Functionally, DNA-dependent RNA polymerase catalyzes the transcription of DNA into RNA using the four ribonucleoside triphosphates as substrates. In Borrelia turicatae (strain 91E135), this protein is DNA-directed RNA polymerase subunit beta'.